A 62-amino-acid chain; its full sequence is Conotoxin Gm5.2 (62 aa).

The N-terminal stretch at 1–22 (MRCLPVFVILLLLIASAPSVDA) is a signal peptide. Positions 23–49 (QPKTKDDVPLAPLHDNIRSTLQTLRKK) are excised as a propeptide. Residue serine 60 is modified to Serine amide.

The protein belongs to the conotoxin T superfamily. In terms of processing, contains 2 disulfide bonds that can be either 'C1-C3, C2-C4' or 'C1-C4, C2-C3', since these disulfide connectivities have been observed for conotoxins with cysteine framework V (for examples, see AC P0DQQ7 and AC P81755). As to expression, expressed by the venom duct.

The protein resides in the secreted. The polypeptide is Conotoxin Gm5.2 (Conus gloriamaris (Glory-of-the-Sea cone)).